A 96-amino-acid polypeptide reads, in one-letter code: Small ribosomal subunit protein bS20 (96 aa).

Residues 1–27 (MAKQEVAAKKVKRPTALKRDLQNKKKR) are disordered.

It belongs to the bacterial ribosomal protein bS20 family.

Functionally, binds directly to 16S ribosomal RNA. This is Small ribosomal subunit protein bS20 from Protochlamydia amoebophila (strain UWE25).